The primary structure comprises 33 residues: Protamine-1A (33 aa).

The interval 1–33 (PRRRRSSSRPVRRRRRPRRVSRRRRRRGGRRRR) is disordered.

As to expression, testis.

Its subcellular location is the nucleus. The protein resides in the chromosome. Protamines substitute for histones in the chromatin of sperm during the haploid phase of spermatogenesis. They compact sperm DNA into a highly condensed, stable and inactive complex. This Oncorhynchus mykiss (Rainbow trout) protein is Protamine-1A.